The chain runs to 61 residues: Potassium channel toxin alpha-KTx 6.7 (61 aa).

Positions 1–23 (MNAKFILLLLVVTTTMLLPDTQG) are cleaved as a signal peptide. Cystine bridges form between Cys29-Cys50, Cys35-Cys55, Cys39-Cys57, and Cys45-Cys60. Cys60 carries the cysteine amide modification.

It belongs to the short scorpion toxin superfamily. Potassium channel inhibitor family. Alpha-KTx 06 subfamily. In terms of tissue distribution, expressed by the venom gland.

Its subcellular location is the secreted. Its function is as follows. Blocker of voltage-gated potassium channels. In Opistophthalmus carinatus (African yellow leg scorpion), this protein is Potassium channel toxin alpha-KTx 6.7.